We begin with the raw amino-acid sequence, 185 residues long: ATP-dependent protease subunit HslV (185 aa).

Thr-12 is a catalytic residue. Na(+)-binding residues include Ala-168, Cys-171, and Thr-174.

Belongs to the peptidase T1B family. HslV subfamily. In terms of assembly, a double ring-shaped homohexamer of HslV is capped on each side by a ring-shaped HslU homohexamer. The assembly of the HslU/HslV complex is dependent on binding of ATP.

Its subcellular location is the cytoplasm. It catalyses the reaction ATP-dependent cleavage of peptide bonds with broad specificity.. Its activity is regulated as follows. Allosterically activated by HslU binding. Functionally, protease subunit of a proteasome-like degradation complex believed to be a general protein degrading machinery. The polypeptide is ATP-dependent protease subunit HslV (Roseobacter denitrificans (strain ATCC 33942 / OCh 114) (Erythrobacter sp. (strain OCh 114))).